Consider the following 1095-residue polypeptide: Solute carrier family 12 member 1 (1095 aa).

Residues 1–173 (MSVSIPSNSV…EEDMTGVVKF (173 aa)) are Cytoplasmic-facing. The RFXV motif signature appears at 16–19 (RFQV). The tract at residues 29–49 (AAAVGDSADPPHYEETSFGDE) is disordered. Phosphoserine is present on residues Ser57 and Ser87. Thr91, Thr96, Thr101, and Thr114 each carry phosphothreonine. Ser116 bears the Phosphoserine mark. Residue Ser126 is modified to Phosphoserine; by AMPK. The residue at position 144 (Ser144) is a Phosphoserine. Residues 174-194 (GWVKGVLVRCMLNIWGVMLFI) traverse the membrane as a helical segment. Residues 195 to 197 (RLS) lie on the Extracellular side of the membrane. A helical transmembrane segment spans residues 198-218 (WIVGEAGIGLGVLIILLSTMV). At 219–255 (TSITGLSTSAIATNGFVRGGGAYYLISRSLGPEFGGS) the chain is on the cytoplasmic side. The helical transmembrane segment at 256–276 (IGLIFAFANAVAVAMYVVGFA) threads the bilayer. Residues 277 to 298 (ETVVDLLKESDSMMVDPTNDIR) are Extracellular-facing. Residues 299-319 (IIGSITVVILLGISVAGMEWE) traverse the membrane as a helical segment. At 320 to 323 (AKAQ) the chain is on the cytoplasmic side. A helical transmembrane segment spans residues 324–344 (VILLVILLIAIANFFIGTVIP). The Extracellular portion of the chain corresponds to 345–375 (SNNEKKSRGFFNYQASIFAENFGPSFTKGEG). The helical transmembrane segment at 376-396 (FFSVFAIFFPAATGILAGANI) threads the bilayer. Residues 397-413 (SGDLEDPQDAIPRGTML) are Cytoplasmic-facing. The helical transmembrane segment at 414–434 (AIFITTVAYIGVAICVAACVV) threads the bilayer. The Extracellular portion of the chain corresponds to 435 to 546 (RDATGSMNDT…NNEPLRGYFL (112 aa)). N-linked (GlcNAc...) asparagine glycosylation is found at Asn442 and Asn452. The next 2 membrane-spanning stretches (helical) occupy residues 547–567 (TFVI…APII) and 568–588 (SNFF…ASYA). At 589–605 (KSPGWRPAYGIYNMWVS) the chain is on the extracellular side. A helical transmembrane segment spans residues 606-626 (LFGAILCCAVMFVINWWAAVI). Over 627–1095 (TYVIELFLYI…NHKNVLTFYS (469 aa)) the chain is Cytoplasmic.

It belongs to the SLC12A transporter family. When phosphorylated, interacts with PPP3CB. Post-translationally, phosphorylated at Ser-87, Thr-96 and Thr-101 by OXSR1/OSR1 and STK39/SPAK downstream of WNK kinases (WNK1, WNK2, WNK3 or WNK4), promoting its activity. Short-term cyclosporine administration increases SLC12A1 phosphorylation in kidney thick ascending limb, possibly through the inhibition of PPP3CB/calcineurin A beta phosphatase. Predominantly expressed in kidney (at protein level). In terms of tissue distribution, kidney-specific; most highly expressed in the outer stripe of outer medulla (at protein level). As to expression, kidney-specific; most highly expressed in the cortical thick ascending limb (at protein level). Kidney-specific; most highly expressed in the inner stripe of outer medulla (at protein level).

Its subcellular location is the apical cell membrane. The catalysed reaction is K(+)(out) + 2 chloride(out) + Na(+)(out) = K(+)(in) + 2 chloride(in) + Na(+)(in). Activated following phosphorylation by OXSR1/OSR1 and STK39/SPAK downstream of WNK kinases (WNK1, WNK2, WNK3 or WNK4). Its activity is regulated as follows. Inhibited by mercury dichloride and diuretic drug bumetaide. Inactive in isotonic conditions. Functionally, renal sodium, potassium and chloride ion cotransporter that mediates the transepithelial NaCl reabsorption in the thick ascending limb and plays an essential role in the urinary concentration and volume regulation. Electrically silent transporter system. Its function is as follows. High affinity, high capacity cotransporter for sodium, potassium and chloride ions, with a coupling ratio 1Na(+):1K(+):2Cl(-). In terms of biological role, high affinity, low capacity cotransporter for sodium, potassium and chloride ions, with a coupling ratio 1Na(+):1K(+):2Cl(-). Low affinity, low capacity cotransporter for sodium, potassium and chloride ions, with a coupling ratio 1Na(+):1K(+):2Cl(-). The chain is Solute carrier family 12 member 1 (Slc12a1) from Mus musculus (Mouse).